We begin with the raw amino-acid sequence, 132 residues long: ATP synthase epsilon chain, chloroplastic (132 aa).

This sequence belongs to the ATPase epsilon chain family. In terms of assembly, F-type ATPases have 2 components, CF(1) - the catalytic core - and CF(0) - the membrane proton channel. CF(1) has five subunits: alpha(3), beta(3), gamma(1), delta(1), epsilon(1). CF(0) has three main subunits: a, b and c.

The protein resides in the plastid. It localises to the chloroplast thylakoid membrane. Its function is as follows. Produces ATP from ADP in the presence of a proton gradient across the membrane. In Calycanthus floridus var. glaucus (Eastern sweetshrub), this protein is ATP synthase epsilon chain, chloroplastic.